Consider the following 132-residue polypeptide: Putative RNase AF_0947 (132 aa).

Residues R91 and H96 contribute to the active site. The short motif at 91-98 is the RX(4)HXY motif element; it reads RNAIAHHY. Position 98 is an O-di-AMP-tyrosine (Y98).

It belongs to the HepT RNase toxin family. As to quaternary structure, homodimer, probably forms a complex with cognate antitoxin AF_0948. Post-translationally, modified by cognate antitoxin AF_0948; probably at least 2 successive AMPylation events occur on Tyr-98.

In terms of biological role, probable toxic component of a putative type VII toxin-antitoxin (TA) system, probably an RNase. Probably neutralized by cognate antitoxin AF_0948. Neutralization may be due to AMPylation by AF_0948. This chain is Putative RNase AF_0947, found in Archaeoglobus fulgidus (strain ATCC 49558 / DSM 4304 / JCM 9628 / NBRC 100126 / VC-16).